The chain runs to 344 residues: NAD-dependent alcohol dehydrogenase (344 aa).

7 residues coordinate Zn(2+): cysteine 38, histidine 66, aspartate 96, cysteine 99, cysteine 102, cysteine 110, and cysteine 152.

It belongs to the zinc-containing alcohol dehydrogenase family. As to quaternary structure, homodimer and homotetramer. Requires Zn(2+) as cofactor.

It carries out the reaction a primary alcohol + NAD(+) = an aldehyde + NADH + H(+). The catalysed reaction is a secondary alcohol + NAD(+) = a ketone + NADH + H(+). The polypeptide is NAD-dependent alcohol dehydrogenase (adh) (Sulfolobus acidocaldarius (strain ATCC 33909 / DSM 639 / JCM 8929 / NBRC 15157 / NCIMB 11770)).